The sequence spans 242 residues: Ribonuclease HII (242 aa).

One can recognise an RNase H type-2 domain in the interval 21–234; it reads KIIVGLDEAG…SKNLLKEIEE (214 aa). Residues D27, E28, and D128 each coordinate a divalent metal cation.

Belongs to the RNase HII family. Mn(2+) serves as cofactor. Mg(2+) is required as a cofactor.

It localises to the cytoplasm. The catalysed reaction is Endonucleolytic cleavage to 5'-phosphomonoester.. Functionally, endonuclease that specifically degrades the RNA of RNA-DNA hybrids. The chain is Ribonuclease HII from Methanococcus maripaludis (strain DSM 14266 / JCM 13030 / NBRC 101832 / S2 / LL).